The chain runs to 441 residues: tRNA modification GTPase MnmE (441 aa).

Residues Arg21, Glu78, and Lys117 each coordinate (6S)-5-formyl-5,6,7,8-tetrahydrofolate. A TrmE-type G domain is found at Gly211–Lys363. Asn221 provides a ligand contact to K(+). Residues Asn221–Thr226, Thr240–Thr246, and Asp265–Gly268 each bind GTP. Ser225 contacts Mg(2+). K(+)-binding residues include Thr240, Ile242, and Thr245. Thr246 is a binding site for Mg(2+). (6S)-5-formyl-5,6,7,8-tetrahydrofolate is bound at residue Lys441.

This sequence belongs to the TRAFAC class TrmE-Era-EngA-EngB-Septin-like GTPase superfamily. TrmE GTPase family. Homodimer. Heterotetramer of two MnmE and two MnmG subunits. K(+) is required as a cofactor.

It localises to the cytoplasm. Its function is as follows. Exhibits a very high intrinsic GTPase hydrolysis rate. Involved in the addition of a carboxymethylaminomethyl (cmnm) group at the wobble position (U34) of certain tRNAs, forming tRNA-cmnm(5)s(2)U34. In Thermosipho melanesiensis (strain DSM 12029 / CIP 104789 / BI429), this protein is tRNA modification GTPase MnmE.